Here is a 108-residue protein sequence, read N- to C-terminus: MGNICCVKCEMCHQKYSRKKIHSKKICYKCLLVPVNQINNSPSNNSIHKMNYKKNHEMNHEANHVSHIINTNDTDWYVQRNKRKYHPNPSDSRYGSRCFSAGLPVGFG.

Residue G2 is the site of N-myristoyl glycine; by host attachment.

This is an uncharacterized protein from Acanthamoeba polyphaga (Amoeba).